The primary structure comprises 400 residues: MGGWSSKPRQGMGTNLSVPNPLGFFPDHQLDPAFGANSNNPDWDFNPNKDHWPEANQVGAGAFGPGFTPPHGGLLGWSPQAQGILTTVPAAPPPASTNRQSGRQPTPISPPLRDSHPQAMQWNSTTFHQALLDPRVKGLYFPAGGSSSGTVNPVPTTASPISSIFSRTGDPAPNMESTTSGFLGPLLVLQAGFFLLTRILTIPQSLDSWWTSLNFLGGAPTCPGQNSQSPTSNHSPTSCPPICPGYRWMCLRRFIIFLFILLLCLIFLLVLLDFQGMLPVCPLLPGTSTTSTGPCKTCTIPAQGTSMFPSCCCTKPSDGNCTCIPIPSSWAFARFLWEWASVRFSWLSLLVPFVQWFAGLSPTVWLSVIWMMWYWGPSLYNILSPFLPLLPIFFCLWVYI.

N-acetylmethionine is present on Met1. Disordered regions lie at residues 1–55 (MGGW…WPEA) and 85–118 (LTTVPAAPPPASTNRQSGRQPTPISPPLRDSHPQ). The N-myristoyl glycine; by host moiety is linked to residue Gly2. The interval 2 to 119 (GGWSSKPRQG…PPLRDSHPQA (118 aa)) is pre-S1. Positions 2-174 (GGWSSKPRQG…FSRTGDPAPN (173 aa)) are pre-S. Residues 2 to 181 (GGWSSKPRQG…APNMESTTSG (180 aa)) are Virion surface; in external conformation-facing. At 2–253 (GGWSSKPRQG…PGYRWMCLRR (252 aa)) the chain is on the intravirion; in internal conformation side. N-linked (GlcNAc...) asparagine glycosylation occurs at Trp4. Positions 96-106 (STNRQSGRQPT) are enriched in polar residues. A pre-S2 region spans residues 120 to 174 (MQWNSTTFHQALLDPRVKGLYFPAGGSSSGTVNPVPTTASPISSIFSRTGDPAPN). The helical transmembrane segment at 182–202 (FLGPLLVLQAGFFLLTRILTI) threads the bilayer. Over 203-253 (PQSLDSWWTSLNFLGGAPTCPGQNSQSPTSNHSPTSCPPICPGYRWMCLRR) the chain is Intravirion; in external conformation. Residues 254–274 (FIIFLFILLLCLIFLLVLLDF) traverse the membrane as a helical segment. At 275–348 (QGMLPVCPLL…WASVRFSWLS (74 aa)) the chain is on the virion surface side. N-linked (GlcNAc...) asparagine; by host glycosylation occurs at Asn320. A helical transmembrane segment spans residues 349 to 369 (LLVPFVQWFAGLSPTVWLSVI). The Intravirion segment spans residues 370 to 375 (WMMWYW). The helical transmembrane segment at 376 to 398 (GPSLYNILSPFLPLLPIFFCLWV) threads the bilayer. Residues 399–400 (YI) are Virion surface-facing.

Belongs to the orthohepadnavirus major surface antigen family. As to quaternary structure, in its internal form (Li-HBsAg), interacts with the capsid protein and with the isoform S. Interacts with host chaperone CANX. Associates with host chaperone CANX through its pre-S2 N glycan; this association may be essential for isoform M proper secretion. In terms of assembly, interacts with isoform L. Interacts with the antigens of satellite virus HDV (HDVAgs); this interaction is required for encapsidation of HDV genomic RNA. Post-translationally, isoform M is N-terminally acetylated by host at a ratio of 90%, and N-glycosylated by host at the pre-S2 region. Myristoylated.

It is found in the virion membrane. Functionally, the large envelope protein exists in two topological conformations, one which is termed 'external' or Le-HBsAg and the other 'internal' or Li-HBsAg. In its external conformation the protein attaches the virus to cell receptors and thereby initiating infection. This interaction determines the species specificity and liver tropism. This attachment induces virion internalization predominantly through caveolin-mediated endocytosis. The large envelope protein also assures fusion between virion membrane and endosomal membrane. In its internal conformation the protein plays a role in virion morphogenesis and mediates the contact with the nucleocapsid like a matrix protein. Its function is as follows. The middle envelope protein plays an important role in the budding of the virion. It is involved in the induction of budding in a nucleocapsid independent way. In this process the majority of envelope proteins bud to form subviral lipoprotein particles of 22 nm of diameter that do not contain a nucleocapsid. In Hepatitis B virus genotype C subtype ar (isolate Japan/S-207/1988) (HBV-C), this protein is Large envelope protein.